A 151-amino-acid polypeptide reads, in one-letter code: uncharacterized protein (151 aa).

This is an uncharacterized protein from Mycoplasma genitalium (strain ATCC 33530 / DSM 19775 / NCTC 10195 / G37) (Mycoplasmoides genitalium).